Consider the following 152-residue polypeptide: Aspartate carbamoyltransferase regulatory chain (152 aa).

Zn(2+)-binding residues include Cys-108, Cys-113, Cys-137, and Cys-140.

The protein belongs to the PyrI family. As to quaternary structure, contains catalytic and regulatory chains. The cofactor is Zn(2+).

Its function is as follows. Involved in allosteric regulation of aspartate carbamoyltransferase. The polypeptide is Aspartate carbamoyltransferase regulatory chain (Neisseria meningitidis serogroup A / serotype 4A (strain DSM 15465 / Z2491)).